Consider the following 523-residue polypeptide: 2-isopropylmalate synthase (523 aa).

One can recognise a Pyruvate carboxyltransferase domain in the interval 12–274; that stretch reads VVIFDTTLRD…WNKIDTTQLT (263 aa). Mn(2+) is bound by residues aspartate 21, histidine 209, histidine 211, and asparagine 245. The segment at 398 to 523 is regulatory domain; it reads KLLSLSVIAG…AQGAAAAAAS (126 aa).

This sequence belongs to the alpha-IPM synthase/homocitrate synthase family. LeuA type 1 subfamily. In terms of assembly, homodimer. It depends on Mn(2+) as a cofactor.

It is found in the cytoplasm. The catalysed reaction is 3-methyl-2-oxobutanoate + acetyl-CoA + H2O = (2S)-2-isopropylmalate + CoA + H(+). Its pathway is amino-acid biosynthesis; L-leucine biosynthesis; L-leucine from 3-methyl-2-oxobutanoate: step 1/4. Its function is as follows. Catalyzes the condensation of the acetyl group of acetyl-CoA with 3-methyl-2-oxobutanoate (2-ketoisovalerate) to form 3-carboxy-3-hydroxy-4-methylpentanoate (2-isopropylmalate). The chain is 2-isopropylmalate synthase from Bradyrhizobium sp. (strain BTAi1 / ATCC BAA-1182).